The sequence spans 118 residues: Small ribosomal subunit protein uS13 (118 aa).

The segment at 92–118 is disordered; sequence RRSLPVRGQRTKTNARTRKGPRKPIKK.

It belongs to the universal ribosomal protein uS13 family. As to quaternary structure, part of the 30S ribosomal subunit. Forms a loose heterodimer with protein S19. Forms two bridges to the 50S subunit in the 70S ribosome.

In terms of biological role, located at the top of the head of the 30S subunit, it contacts several helices of the 16S rRNA. In the 70S ribosome it contacts the 23S rRNA (bridge B1a) and protein L5 of the 50S subunit (bridge B1b), connecting the 2 subunits; these bridges are implicated in subunit movement. Contacts the tRNAs in the A and P-sites. The polypeptide is Small ribosomal subunit protein uS13 (Acinetobacter baumannii (strain AB307-0294)).